The sequence spans 193 residues: Cysteine and glycine-rich protein 1 (193 aa).

The 52-residue stretch at 10–61 (CGVCQKTVYFAEEVQCEGNSFHKSCFLCMVCKKNLDSTTVAVHGEEIYCKSC) folds into the LIM zinc-binding 1 domain. Positions 64 to 69 (KKYGPK) match the Nuclear localization signal motif. Ser-81 carries the phosphoserine modification. Lys-84 carries the post-translational modification N6-acetyllysine. Lys-91 is covalently cross-linked (Glycyl lysine isopeptide (Lys-Gly) (interchain with G-Cter in SUMO2)). 4 positions are modified to N6-acetyllysine: Lys-112, Lys-131, Lys-137, and Lys-161. Residues 119–170 (CPRCSQAVYAAEKVIGAGKSWHKACFRCAKCGKGLESTTLADKDGEIYCKGC) form the LIM zinc-binding 2 domain. A Phosphoserine modification is found at Ser-192.

Interacts with ASCC1; ASCC2 and TRIP4.

The protein resides in the nucleus. Functionally, could play a role in neuronal development. This chain is Cysteine and glycine-rich protein 1 (CSRP1), found in Homo sapiens (Human).